Consider the following 1006-residue polypeptide: DNA polymerase (1006 aa).

It belongs to the DNA polymerase type-B family. In terms of assembly, interacts with OPG148. Component of the Uracil-DNA glycosylase(UDG)-OPG148-polymerase complex; OPG148 and OPG116/UDG form a heterodimeric processivity factor that associates with OPG071 to form the processive polymerase holoenzyme.

It carries out the reaction DNA(n) + a 2'-deoxyribonucleoside 5'-triphosphate = DNA(n+1) + diphosphate. In terms of biological role, catalyzes DNA synthesis. Acquires processivity by associating with a heterodimeric processivity factor comprised of the viral OPG148 and OPG116 proteins, thereby forming the DNA polymerase holoenzyme. Displays 3'- to 5' exonuclease activity. Might participate in viral DNA recombination. Does not perform OPG116/D4synthesis across an abasic site. In Homo sapiens (Human), this protein is DNA polymerase (OPG071).